The chain runs to 86 residues: Probable weak neurotoxin NNAM2I (86 aa).

The first 21 residues, Met-1–Thr-21, serve as a signal peptide directing secretion. 5 disulfide bridges follow: Cys-24/Cys-45, Cys-27/Cys-32, Cys-38/Cys-63, Cys-67/Cys-78, and Cys-79/Cys-84.

This sequence belongs to the three-finger toxin family. Ancestral subfamily. Orphan group II sub-subfamily. As to expression, expressed by the venom gland.

The protein localises to the secreted. In terms of biological role, binds with low affinity to muscular (alpha-1-beta-1-delta-epsilon/CHRNA1-CHRNB1-CHRND-CHRNE) and very low affinity to neuronal (alpha-7/CHRNA7) nicotinic acetylcholine receptor (nAChR). This chain is Probable weak neurotoxin NNAM2I, found in Naja atra (Chinese cobra).